The sequence spans 688 residues: G protein-coupled receptor kinase 3 (688 aa).

The tract at residues Met1–Asp190 is N-terminal. In terms of domain architecture, RGS spans Thr54 to Cys175. Positions Phe191–Phe453 constitute a Protein kinase domain. ATP is bound by residues Ile197–Val205 and Lys220. Asp317 functions as the Proton acceptor in the catalytic mechanism. In terms of domain architecture, AGC-kinase C-terminal spans Lys454–Val521. One can recognise a PH domain in the interval Asp558–Asn652.

The protein belongs to the protein kinase superfamily. AGC Ser/Thr protein kinase family. GPRK subfamily. As to quaternary structure, interacts with GIT1. In terms of processing, ubiquitinated.

Its subcellular location is the postsynapse. It is found in the presynapse. It catalyses the reaction [beta-adrenergic receptor] + ATP = [beta-adrenergic receptor]-phosphate + ADP + H(+). Specifically phosphorylates the agonist-occupied form of the beta-adrenergic and closely related receptors. The chain is G protein-coupled receptor kinase 3 from Mus musculus (Mouse).